Here is a 157-residue protein sequence, read N- to C-terminus: Endoribonuclease YbeY (157 aa).

Zn(2+) is bound by residues histidine 116, histidine 120, and histidine 126.

It belongs to the endoribonuclease YbeY family. The cofactor is Zn(2+).

It is found in the cytoplasm. In terms of biological role, single strand-specific metallo-endoribonuclease involved in late-stage 70S ribosome quality control and in maturation of the 3' terminus of the 16S rRNA. This Blochmanniella pennsylvanica (strain BPEN) protein is Endoribonuclease YbeY.